A 328-amino-acid chain; its full sequence is RNA 3'-terminal phosphate cyclase (328 aa).

ATP contacts are provided by residues glutamine 100 and 276–280 (HLADQ). The active-site Tele-AMP-histidine intermediate is the histidine 302.

The protein belongs to the RNA 3'-terminal cyclase family. Type 1 subfamily.

The protein resides in the cytoplasm. The catalysed reaction is a 3'-end 3'-phospho-ribonucleotide-RNA + ATP = a 3'-end 2',3'-cyclophospho-ribonucleotide-RNA + AMP + diphosphate. Catalyzes the conversion of 3'-phosphate to a 2',3'-cyclic phosphodiester at the end of RNA. The mechanism of action of the enzyme occurs in 3 steps: (A) adenylation of the enzyme by ATP; (B) transfer of adenylate to an RNA-N3'P to produce RNA-N3'PP5'A; (C) and attack of the adjacent 2'-hydroxyl on the 3'-phosphorus in the diester linkage to produce the cyclic end product. The biological role of this enzyme is unknown but it is likely to function in some aspects of cellular RNA processing. The polypeptide is RNA 3'-terminal phosphate cyclase (rtcA) (Archaeoglobus fulgidus (strain ATCC 49558 / DSM 4304 / JCM 9628 / NBRC 100126 / VC-16)).